The chain runs to 61 residues: Metallothionein-2D (61 aa).

M1 is modified (N-acetylmethionine). The beta stretch occupies residues 1-29 (MDPNCSCATRDSCACASSCKCKECKCTSC). C5, C7, C13, C15, C19, C21, C24, C26, C29, C33, C34, C36, C37, C41, C44, C48, C50, C57, C59, and C60 together coordinate a divalent metal cation. The interval 30 to 61 (KKSCCSCCPAGCTKCAQGCICKGASDKCSCCA) is alpha.

The protein belongs to the metallothionein superfamily. Type 1 family. In terms of assembly, monomer.

Metallothioneins have a high content of cysteine residues that bind various heavy metals; these proteins are transcriptionally regulated by both heavy metals and glucocorticoids. The sequence is that of Metallothionein-2D from Oryctolagus cuniculus (Rabbit).